The following is a 347-amino-acid chain: Heme A synthase (347 aa).

A run of 8 helical transmembrane segments spans residues 14–34 (VKIWLCICCIGILIMVFIGGI), 96–116 (FHRLLGRIVGLVFLIPFLYFM), 129–149 (FILIAFLILVQGVMGWYMVKS), 162–182 (LAMHLLLALAIFYLLWKHFLL), 199–219 (VFYIIISLITIQITCGALVAG), 260–280 (FIHEVIALLILIIAVITLLVL), 287–307 (MYLLLALLLIQLTLGILTFIY), and 311–331 (IILASLHQVTAFILFASSIYL). Residue H262 participates in heme binding. H317 provides a ligand contact to heme.

This sequence belongs to the COX15/CtaA family. Type 2 subfamily. Interacts with CtaB. Heme b is required as a cofactor.

It is found in the cell membrane. It catalyses the reaction Fe(II)-heme o + 2 A + H2O = Fe(II)-heme a + 2 AH2. It functions in the pathway porphyrin-containing compound metabolism; heme A biosynthesis; heme A from heme O: step 1/1. Catalyzes the conversion of heme O to heme A by two successive hydroxylations of the methyl group at C8. The first hydroxylation forms heme I, the second hydroxylation results in an unstable dihydroxymethyl group, which spontaneously dehydrates, resulting in the formyl group of heme A. The protein is Heme A synthase of Ehrlichia ruminantium (strain Gardel).